The chain runs to 510 residues: NAD(P)H-quinone oxidoreductase subunit 2 A, chloroplastic (510 aa).

14 helical membrane-spanning segments follow: residues 31–51 (LIFPECILIFGLILLLMIDLT), 57–77 (IPWLYFISSTSLVMSITALLF), 99–119 (IFQFLILLCSTLCIPLSVEYI), 124–144 (MAITEFLLFVLTATLGGMFLC), 149–169 (LITIFVALECFSLCSYLLSGY), 184–204 (LLMGGASSSILVYGFSWLYGL), 229–249 (ISIALIFITVGIGFKLSLAPF), 261–281 (PTPVVAFLSVTSKVAALALAT), 295–315 (WHLLLEILAILSMILGNLIAI), 323–343 (MLAYSSIGQIGYVIIGIIVGD), 354–374 (YMLFYISMNLGTFACIVLFGL), 395–415 (ALSLALCLLSLGGLPPLAGFF), 418–438 (LYLFWCGWQAGLYFLVLIGLL), and 484–504 (MIVCVIASTILGISMNPIIAI).

The protein belongs to the complex I subunit 2 family. NDH is composed of at least 16 different subunits, 5 of which are encoded in the nucleus.

It localises to the plastid. The protein localises to the chloroplast thylakoid membrane. The enzyme catalyses a plastoquinone + NADH + (n+1) H(+)(in) = a plastoquinol + NAD(+) + n H(+)(out). It carries out the reaction a plastoquinone + NADPH + (n+1) H(+)(in) = a plastoquinol + NADP(+) + n H(+)(out). NDH shuttles electrons from NAD(P)H:plastoquinone, via FMN and iron-sulfur (Fe-S) centers, to quinones in the photosynthetic chain and possibly in a chloroplast respiratory chain. The immediate electron acceptor for the enzyme in this species is believed to be plastoquinone. Couples the redox reaction to proton translocation, and thus conserves the redox energy in a proton gradient. The chain is NAD(P)H-quinone oxidoreductase subunit 2 A, chloroplastic from Nicotiana tabacum (Common tobacco).